The following is an 82-amino-acid chain: Savignygrin (-) (82 aa).

An N-terminal signal peptide occupies residues Met-1–Gly-21. Intrachain disulfides connect Cys-26–Cys-79, Cys-34–Cys-59, and Cys-53–Cys-75. Residues Arg-35–Asp-37 carry the Cell attachment site motif.

Expressed in salivary glands.

The protein resides in the cytoplasmic vesicle. It is found in the secretory vesicle. It localises to the secreted. Tick salivary platelet aggregation inhibitor that plays an important part in the anti-hemostatic strategy of ticks. Inhibits platelet aggregation induced by ADP (IC(50)=130 nM), collagen, the thrombin receptor-activating peptide, and epinephrine, although platelets are activated and their shape changed. Binding to platelets is similar for resting and activated platelets (Kd=50-70 nM). Acts by specifically binding to platelet membrane glycoprotein IIb-IIIa (ITGA2B/ITGB3) in a divalent metal ion dependent manner. In contrast to many disintegrins which only interacts with the beta-3 subunit, this protein interacts with the two subunits (alpha-IIb and beta-3). Also causes disaggregation of aggregated platelets without influencing the activated spherical shape associated with aggregated platelets and causes a decrease in the number of pseudopodia on the activated platelet surface. Does not show any inhibitory activity for the different serine proteases tested. This is Savignygrin (-) from Ornithodoros kalahariensis (Tick).